A 62-amino-acid polypeptide reads, in one-letter code: MEWKTCSFCEGTIEPGCGKKYVKKDGSVMHFCSSKCEKNFKLGRVGRKVKWTNTFKRINRGQ.

Positions 6, 9, 32, and 36 each coordinate Zn(2+). The C4-type zinc-finger motif lies at 6–36; it reads CSFCEGTIEPGCGKKYVKKDGSVMHFCSSKC.

The protein belongs to the eukaryotic ribosomal protein eL24 family. In terms of assembly, part of the 50S ribosomal subunit. Forms a cluster with proteins L3 and L14. Zn(2+) serves as cofactor.

Binds to the 23S rRNA. This is Large ribosomal subunit protein eL24 from Methanococcus maripaludis (strain C7 / ATCC BAA-1331).